A 118-amino-acid polypeptide reads, in one-letter code: MTDLIPLEQAHCLPRKGSDHKLGEARLAELLPQVPGWELAEAGMALTRTFRFADYYHTLAFVNALAWIAHREDHHPDLGVHYDRVVVRYSTHDVGGLSENDFICAAKTARLYDQGITA.

This sequence belongs to the pterin-4-alpha-carbinolamine dehydratase family.

It carries out the reaction (4aS,6R)-4a-hydroxy-L-erythro-5,6,7,8-tetrahydrobiopterin = (6R)-L-erythro-6,7-dihydrobiopterin + H2O. The protein is Putative pterin-4-alpha-carbinolamine dehydratase of Xanthomonas oryzae pv. oryzae (strain MAFF 311018).